The sequence spans 205 residues: Phosphoenolpyruvate guanylyltransferase (205 aa).

Phosphoenolpyruvate is bound by residues Thr-138, Gly-154, and Ser-157.

It belongs to the CofC family.

It carries out the reaction phosphoenolpyruvate + GTP + H(+) = enolpyruvoyl-2-diphospho-5'-guanosine + diphosphate. The protein operates within cofactor biosynthesis; coenzyme F420 biosynthesis. Guanylyltransferase that catalyzes the activation of phosphoenolpyruvate (PEP) as enolpyruvoyl-2-diphospho-5'-guanosine, via the condensation of PEP with GTP. It is involved in the biosynthesis of coenzyme F420, a hydride carrier cofactor. This is Phosphoenolpyruvate guanylyltransferase from Chloroflexus aurantiacus (strain ATCC 29364 / DSM 637 / Y-400-fl).